A 745-amino-acid polypeptide reads, in one-letter code: uncharacterized protein (745 aa).

The HTH araC/xylS-type domain occupies 158–256 (NQVCDYIELH…HQTPKQYRGD (99 aa)). 2 DNA-binding regions (H-T-H motif) span residues 175–196 (SELS…AESL) and 223–246 (ITDI…KHIT).

This is an uncharacterized protein from Staphylococcus aureus.